A 352-amino-acid polypeptide reads, in one-letter code: Probable cytosolic iron-sulfur protein assembly protein CIAO1 homolog (352 aa).

7 WD repeats span residues 12 to 51 (ASNK…LWGS), 58 to 97 (AHKK…SAPE), 106 to 145 (GHTS…DVQC), 151 to 190 (PHSQ…WTVF), 195 to 234 (GHDS…GKSS), 245 to 284 (YHTR…LTHI), and 303 to 352 (AHSE…EYEL).

It belongs to the WD repeat CIA1 family.

In terms of biological role, essential component of the cytosolic iron-sulfur (Fe/S) protein assembly machinery. Required for the maturation of extramitochondrial Fe/S proteins. This chain is Probable cytosolic iron-sulfur protein assembly protein CIAO1 homolog, found in Schistosoma japonicum (Blood fluke).